Here is a 97-residue protein sequence, read N- to C-terminus: Putative pterin-4-alpha-carbinolamine dehydratase (97 aa).

This sequence belongs to the pterin-4-alpha-carbinolamine dehydratase family.

The enzyme catalyses (4aS,6R)-4a-hydroxy-L-erythro-5,6,7,8-tetrahydrobiopterin = (6R)-L-erythro-6,7-dihydrobiopterin + H2O. The protein is Putative pterin-4-alpha-carbinolamine dehydratase of Christiangramia forsetii (strain DSM 17595 / CGMCC 1.15422 / KT0803) (Gramella forsetii).